A 207-amino-acid chain; its full sequence is Large ribosomal subunit protein uL3 (207 aa).

The disordered stretch occupies residues 113-148; it reads KGKGFQGPIKRHGQSRGPMAHGSRYHRRPGSMGPVA.

The protein belongs to the universal ribosomal protein uL3 family. Part of the 50S ribosomal subunit. Forms a cluster with proteins L14 and L19.

One of the primary rRNA binding proteins, it binds directly near the 3'-end of the 23S rRNA, where it nucleates assembly of the 50S subunit. The polypeptide is Large ribosomal subunit protein uL3 (Lactococcus lactis subsp. lactis (strain IL1403) (Streptococcus lactis)).